Reading from the N-terminus, the 285-residue chain is tRNA (adenine(58)-N(1))-methyltransferase catalytic subunit TRMT61A (285 aa).

Ser-2 is subject to N-acetylserine. 5 substrate regions span residues 20–22, 35–42, 64–65, 85–89, and 110–117; these read LGH, QTQTRHGV, GW, QILYS, and SGTGSGSV. Residues Leu-87, 114 to 116, Glu-135, Arg-140, 163 to 164, and Asp-181 contribute to the S-adenosyl-L-methionine site; these read SGS and DV. Substrate stretches follow at residues 180 to 183 and 205 to 212; these read LDIP and SFSPCIEQ. Residue Thr-274 participates in substrate binding.

It belongs to the class I-like SAM-binding methyltransferase superfamily. TRM61 family. In terms of assembly, heterotetramer; composed of two copies of TRMT6 and two copies of TRMT61A.

It is found in the nucleus. The enzyme catalyses adenosine(58) in tRNA + S-adenosyl-L-methionine = N(1)-methyladenosine(58) in tRNA + S-adenosyl-L-homocysteine + H(+). It catalyses the reaction an adenosine in mRNA + S-adenosyl-L-methionine = an N(1)-methyladenosine in mRNA + S-adenosyl-L-homocysteine + H(+). In terms of biological role, catalytic subunit of tRNA (adenine-N(1)-)-methyltransferase, which catalyzes the formation of N(1)-methyladenine at position 58 (m1A58) in initiator methionyl-tRNA. Catalytic subunit of mRNA N(1)-methyltransferase complex, which mediates methylation of adenosine residues at the N(1) position of a small subset of mRNAs: N(1) methylation takes place in tRNA T-loop-like structures of mRNAs and is only present at low stoichiometries. This Bos taurus (Bovine) protein is tRNA (adenine(58)-N(1))-methyltransferase catalytic subunit TRMT61A (TRMT61A).